The primary structure comprises 504 residues: D-alanine--D-alanyl carrier protein ligase (504 aa).

152–153 (TS) contacts ATP. Residue D197 participates in D-alanine binding. 292 to 297 (NTYGPT) serves as a coordination point for ATP. D-alanine is bound at residue V301. Residues D383, 394 to 397 (YNGR), and K492 contribute to the ATP site. D-alanine is bound at residue K492.

This sequence belongs to the ATP-dependent AMP-binding enzyme family. DltA subfamily.

It is found in the cytoplasm. It carries out the reaction holo-[D-alanyl-carrier protein] + D-alanine + ATP = D-alanyl-[D-alanyl-carrier protein] + AMP + diphosphate. The protein operates within cell wall biogenesis; lipoteichoic acid biosynthesis. Its function is as follows. Catalyzes the first step in the D-alanylation of lipoteichoic acid (LTA), the activation of D-alanine and its transfer onto the D-alanyl carrier protein (Dcp) DltC. In an ATP-dependent two-step reaction, forms a high energy D-alanyl-AMP intermediate, followed by transfer of the D-alanyl residue as a thiol ester to the phosphopantheinyl prosthetic group of the Dcp. D-alanylation of LTA plays an important role in modulating the properties of the cell wall in Gram-positive bacteria, influencing the net charge of the cell wall. This is D-alanine--D-alanyl carrier protein ligase from Bacillus cereus (strain B4264).